The primary structure comprises 177 residues: Chorismate pyruvate-lyase (177 aa).

The substrate site is built by M36, R78, L116, and E157.

It belongs to the UbiC family. Monomer.

It localises to the cytoplasm. It carries out the reaction chorismate = 4-hydroxybenzoate + pyruvate. The protein operates within cofactor biosynthesis; ubiquinone biosynthesis. In terms of biological role, removes the pyruvyl group from chorismate, with concomitant aromatization of the ring, to provide 4-hydroxybenzoate (4HB) for the ubiquinone pathway. In Pectobacterium atrosepticum (strain SCRI 1043 / ATCC BAA-672) (Erwinia carotovora subsp. atroseptica), this protein is Chorismate pyruvate-lyase.